The following is a 757-amino-acid chain: MDVNPTLLFLKVPAQNAISTTFPYTGDPPYSHGTGTGYTMDTVNRTHQYSEKGKWTTNTETGAPQLNPIDGPLPEDNEPSGYAQTDCVLEAMAFLEESHPGIFENSCLETMEVVQQTRVDRLTQGRQTYDWTLNRNQPAATALANTIEVFRSNGLTANESGRLIDFLKDVMESMDKEEIEITTHFQRKRRVRDNMTKKMVTQRTIGKKKQRVNKRSYLIRALTLNTMTKDAERGKLKRRAIATPGMQIRGFVYFVETLARSICEKLEQSGLPVGGNEKKAKLANVVRKMMTNSQDTELSFTITGDNTKWNENQNPRMFLAMITYITKNQPEWFRNILSIAPIMFSNKMARLGKGYMFESKRMKLRTQIPAEMLASIDLKYFNESTRKKIEKIRPLLIDGTASLSPGMMMGMFNMLSTVLGVSILNLGQKKYTKTTYWWDGLQSSDDFALIVNAPNHEGIQAGVDRFYRTCKLVGINMSKKKSYINRTGTFEFTSFFYRYGFVANFSMELPSFGVSGINESADMSIGVTVIKNNMINNDLGPATAQMALQLFIKDYRYTYRCHRGDTQIQTRRSFELKKLWEQTRSKAGLLVSDGGPNLYNIRNLHIPEVCLKWELMDEDYQGRLCNPLNPFVSHKEIESVNNAVVMPAHGPAKSMEYDAVATTHSWIPKRNRSILNTSQRGILEDEQMYQKCCNLFEKFFPSSSYRRPVGISSMVEAMVSRARIDARIDFESGRIKKEEFSEIMKICSTIEELRRQK.

A disordered region spans residues 50 to 82 (SEKGKWTTNTETGAPQLNPIDGPLPEDNEPSGY). Positions 55–64 (WTTNTETGAP) are enriched in polar residues. 2 short sequence motifs (nuclear localization signal) span residues 187–195 (RKRRVRDNM) and 203–216 (RTIG…NKRS). The interval 249–256 (RGFVYFVE) is promoter-binding site. The 198-residue stretch at 286 to 483 (VRKMMTNSQD…GINMSKKKSY (198 aa)) folds into the RdRp catalytic domain.

It belongs to the influenza viruses polymerase PB1 family. Influenza RNA polymerase is composed of three subunits: PB1, PB2 and PA. Interacts (via N-terminus) with PA (via C-terminus). Interacts (via C-terminus) with PB2 (via N-terminus); this interaction is essential for transcription initiation. Interacts (via C-terminus) with human PKP2 (via N-terminus); the interaction competitively inhibits the interaction between the RNA polymerase subunits PB1 and PB2. Post-translationally, phosphorylated by host PRKCA.

The protein localises to the host nucleus. It localises to the host cytoplasm. It carries out the reaction RNA(n) + a ribonucleoside 5'-triphosphate = RNA(n+1) + diphosphate. RNA-dependent RNA polymerase which is responsible for replication and transcription of virus RNA segments. The transcription of viral mRNAs occurs by a unique mechanism called cap-snatching. 5' methylated caps of cellular mRNAs are cleaved after 10-13 nucleotides by PA. In turn, these short capped RNAs are used as primers by PB1 for transcription of viral mRNAs. During virus replication, PB1 initiates RNA synthesis and copy vRNA into complementary RNA (cRNA) which in turn serves as a template for the production of more vRNAs. The chain is RNA-directed RNA polymerase catalytic subunit from Influenza A virus (strain A/Kiev/59/1979 H1N1).